A 454-amino-acid polypeptide reads, in one-letter code: MLKMETVDKVDMIKNHGLTASENLEKFLKRIEAKNDDINAFLEVRGEEAIKRAEEIDARIASGKETGKLAGLVIGVKSNINVEDFNVSAASKTLENYTGSYDATVIRRIKEEDGIIIGMTNMDEFAAGSSTETSFFGPTDNPAAPGRIPGGSSGGSAAAVAAGMCDLALGSDTGGSIRNPASHCGVMGFKPTYGAVSRQGLLDLAMSFDQIGPLAADVSGISLALDVISGYDPADPTTLDSSPDLEVERELKGLRVGVVREFLEVTDEAIDEVIQGKLGAMEDEGAEIVELDFGYIDLCLPTYYLINYVEFFSATRKYDGRKYGHRIEDVCGSEVLRRIHMGSYISQKELSGKYYKRALQARSLIRREITGLLSHVDIIAGPTVPKLPHTLGEELEPMEMYAYDVLTVIANLAGIPAASIPAGDVGGVPVGLQLQAKPGDDGMIVSAMREIASL.

Residues Lys77 and Ser152 each act as charge relay system in the active site. The Acyl-ester intermediate role is filled by Ser176.

It belongs to the amidase family. GatA subfamily. Heterotrimer of A, B and C subunits.

The enzyme catalyses L-glutamyl-tRNA(Gln) + L-glutamine + ATP + H2O = L-glutaminyl-tRNA(Gln) + L-glutamate + ADP + phosphate + H(+). Its function is as follows. Allows the formation of correctly charged Gln-tRNA(Gln) through the transamidation of misacylated Glu-tRNA(Gln) in organisms which lack glutaminyl-tRNA synthetase. The reaction takes place in the presence of glutamine and ATP through an activated gamma-phospho-Glu-tRNA(Gln). In Methanothermobacter thermautotrophicus (strain ATCC 29096 / DSM 1053 / JCM 10044 / NBRC 100330 / Delta H) (Methanobacterium thermoautotrophicum), this protein is Glutamyl-tRNA(Gln) amidotransferase subunit A (gatA).